We begin with the raw amino-acid sequence, 129 residues long: Cocaine- and amphetamine-regulated transcript protein (129 aa).

The first 27 residues, Met1 to Ala27, serve as a signal peptide directing secretion. Tyr41 is subject to Phosphotyrosine. A Phosphoserine modification is found at Ser48. 3 disulfides stabilise this stretch: Cys95-Cys113, Cys101-Cys121, and Cys115-Cys128.

Belongs to the CART family. As to expression, neuroendocrine tissues. Predominantly expressed in the hypothalamus, pituitary, and longitudinal muscle-myenteric plexus. Abundant expression is also seen in the midbrain/thalamus and eye. A lower level expression is seen in the other brain regions and adrenal.

The protein localises to the secreted. Functionally, satiety factor closely associated with the actions of leptin and neuropeptide y; this anorectic peptide inhibits both normal and starvation-induced feeding and completely blocks the feeding response induced by neuropeptide Y and regulated by leptin in the hypothalamus. This is Cocaine- and amphetamine-regulated transcript protein (Cartpt) from Rattus norvegicus (Rat).